Reading from the N-terminus, the 237-residue chain is Ubiquinone biosynthesis O-methyltransferase (237 aa).

Arginine 39, glycine 59, aspartate 80, and methionine 124 together coordinate S-adenosyl-L-methionine.

Belongs to the methyltransferase superfamily. UbiG/COQ3 family.

It carries out the reaction a 3-demethylubiquinol + S-adenosyl-L-methionine = a ubiquinol + S-adenosyl-L-homocysteine + H(+). It catalyses the reaction a 3-(all-trans-polyprenyl)benzene-1,2-diol + S-adenosyl-L-methionine = a 2-methoxy-6-(all-trans-polyprenyl)phenol + S-adenosyl-L-homocysteine + H(+). Its pathway is cofactor biosynthesis; ubiquinone biosynthesis. In terms of biological role, O-methyltransferase that catalyzes the 2 O-methylation steps in the ubiquinone biosynthetic pathway. The chain is Ubiquinone biosynthesis O-methyltransferase from Vibrio atlanticus (strain LGP32) (Vibrio splendidus (strain Mel32)).